The following is a 220-amino-acid chain: Deoxyribose-phosphate aldolase (220 aa).

Asp-89 acts as the Proton donor/acceptor in catalysis. The active-site Schiff-base intermediate with acetaldehyde is the Lys-151. Residue Lys-180 is the Proton donor/acceptor of the active site.

This sequence belongs to the DeoC/FbaB aldolase family. DeoC type 1 subfamily.

The protein resides in the cytoplasm. The catalysed reaction is 2-deoxy-D-ribose 5-phosphate = D-glyceraldehyde 3-phosphate + acetaldehyde. It functions in the pathway carbohydrate degradation; 2-deoxy-D-ribose 1-phosphate degradation; D-glyceraldehyde 3-phosphate and acetaldehyde from 2-deoxy-alpha-D-ribose 1-phosphate: step 2/2. Functionally, catalyzes a reversible aldol reaction between acetaldehyde and D-glyceraldehyde 3-phosphate to generate 2-deoxy-D-ribose 5-phosphate. The sequence is that of Deoxyribose-phosphate aldolase from Streptococcus pneumoniae serotype 4 (strain ATCC BAA-334 / TIGR4).